The following is an 89-amino-acid chain: UPF0298 protein GK1096 (89 aa).

This sequence belongs to the UPF0298 family.

Its subcellular location is the cytoplasm. The chain is UPF0298 protein GK1096 from Geobacillus kaustophilus (strain HTA426).